Here is a 196-residue protein sequence, read N- to C-terminus: UPF0340 protein TT_C0214 (196 aa).

Belongs to the UPF0340 family.

The chain is UPF0340 protein TT_C0214 from Thermus thermophilus (strain ATCC BAA-163 / DSM 7039 / HB27).